The sequence spans 195 residues: Protein lin-28 homolog A (195 aa).

One can recognise a CSD domain in the interval 33–106; the sequence is QGSGVCKWFN…GLESTQVTGP (74 aa). The segment at 98 to 127 is disordered; that stretch reads LESTQVTGPGGAPCIGSERRPKVKGQQKRR. Positions 107–130 are flexible linker; it reads GGAPCIGSERRPKVKGQQKRRQRG. Residues 118 to 127 are compositionally biased toward basic residues; the sequence is PKVKGQQKRR. 2 consecutive CCHC-type zinc fingers follow at residues 131–148 and 153–170; these read DRCY…ECKL and KKCH…QCPE. Zn(2+)-binding residues include cysteine 133, cysteine 136, histidine 141, cysteine 146, cysteine 155, cysteine 158, histidine 163, and cysteine 168.

It belongs to the lin-28 family. Monomer.

The protein resides in the cytoplasm. It localises to the rough endoplasmic reticulum. It is found in the P-body. Its subcellular location is the stress granule. The protein localises to the nucleus. The protein resides in the nucleolus. RNA-binding protein that inhibits processing of pre-let-7 miRNAs and regulates translation of mRNAs that control developmental timing, pluripotency and metabolism. Seems to recognize a common structural G-quartet (G4) feature in its miRNA and mRNA targets. 'Translational enhancer' that drives specific mRNAs to polysomes and increases the efficiency of protein synthesis. Its association with the translational machinery and target mRNAs results in an increased number of initiation events per molecule of mRNA and, indirectly, in mRNA stabilization. Suppressor of microRNA (miRNA) biogenesis, including that of let-7. Binds specific target miRNA precursors (pre-miRNAs), recognizing an 5'-GGAG-3' motif found in their terminal loop, and recruits uridylyltransferase. This results in the terminal uridylation of target pre-miRNAs. Uridylated pre-miRNAs fail to be processed by Dicer and undergo degradation. Localized to the periendoplasmic reticulum area, binds to a large number of spliced mRNAs and inhibits the translation of mRNAs destined for the ER, reducing the synthesis of transmembrane proteins, ER or Golgi lumen proteins, and secretory proteins. Binds to and enhances the translation of mRNAs for several metabolic enzymes, increasing glycolysis and oxidative phosphorylation. Which, with the let-7 repression may enhance tissue repair in adult tissue. The polypeptide is Protein lin-28 homolog A (lin28a) (Xenopus laevis (African clawed frog)).